We begin with the raw amino-acid sequence, 257 residues long: Protein LigF (257 aa).

In terms of domain architecture, GST N-terminal spans 1-82; it reads MTLKLYSFGP…YLEDVFPESG (82 aa). In terms of domain architecture, GST C-terminal spans 89 to 257; sequence DPFKRAEMRV…LLKRQNEKVA (169 aa).

It belongs to the GST superfamily.

Lignin degradation enzyme. This chain is Protein LigF (ligF), found in Sphingobium sp. (strain NBRC 103272 / SYK-6).